We begin with the raw amino-acid sequence, 249 residues long: Ribonuclease 3 (249 aa).

An RNase III domain is found at phenylalanine 20–glycine 149. Residue glutamate 62 participates in Mg(2+) binding. Aspartate 66 is a catalytic residue. Aspartate 135 and glutamate 138 together coordinate Mg(2+). Residue glutamate 138 is part of the active site. The DRBM domain maps to aspartate 175–lysine 244. Residues arginine 225 to glutamine 249 are disordered.

It belongs to the ribonuclease III family. As to quaternary structure, homodimer. Mg(2+) serves as cofactor.

The protein resides in the cytoplasm. The catalysed reaction is Endonucleolytic cleavage to 5'-phosphomonoester.. In terms of biological role, digests double-stranded RNA. Involved in the processing of primary rRNA transcript to yield the immediate precursors to the large and small rRNAs (23S and 16S). Processes some mRNAs, and tRNAs when they are encoded in the rRNA operon. Processes pre-crRNA and tracrRNA of type II CRISPR loci if present in the organism. The protein is Ribonuclease 3 of Bacillus licheniformis (strain ATCC 14580 / DSM 13 / JCM 2505 / CCUG 7422 / NBRC 12200 / NCIMB 9375 / NCTC 10341 / NRRL NRS-1264 / Gibson 46).